Consider the following 1159-residue polypeptide: ATP-dependent helicase/deoxyribonuclease subunit B (1159 aa).

Positions 1-275 constitute a UvrD-like helicase ATP-binding domain; sequence MEFNTYIGRA…TYFNTFYRYN (275 aa). ATP is bound at residue 8–15; sequence GRAGTGKS. The UvrD-like helicase C-terminal domain maps to 269–583; that stretch reads NTFYRYNNDD…SIGTMDLAKV (315 aa). Positions 784, 1112, 1115, and 1121 each coordinate [4Fe-4S] cluster.

This sequence belongs to the helicase family. AddB/RexB type 1 subfamily. Heterodimer of AddA and AddB. It depends on Mg(2+) as a cofactor. [4Fe-4S] cluster is required as a cofactor.

Its function is as follows. The heterodimer acts as both an ATP-dependent DNA helicase and an ATP-dependent, dual-direction single-stranded exonuclease. Recognizes the chi site generating a DNA molecule suitable for the initiation of homologous recombination. The AddB subunit has 5' -&gt; 3' nuclease activity but not helicase activity. This is ATP-dependent helicase/deoxyribonuclease subunit B from Staphylococcus epidermidis (strain ATCC 35984 / DSM 28319 / BCRC 17069 / CCUG 31568 / BM 3577 / RP62A).